We begin with the raw amino-acid sequence, 523 residues long: Polypyrimidine tract-binding protein 3 (523 aa).

The disordered stretch occupies residues 1 to 25; sequence MNSSTSAGVYANGNDNKKFKGDRPP. 3 consecutive RRM domains span residues 30–114, 153–229, and 329–403; these read RVLH…NLPN, LRII…FSKL, and SVLL…LSKH. A Glycyl lysine isopeptide (Lys-Gly) (interchain with G-Cter in SUMO2) cross-link involves residue Lys-36. Residue Tyr-98 is modified to Phosphotyrosine. Phosphothreonine is present on Thr-109. Lys-187 is covalently cross-linked (Glycyl lysine isopeptide (Lys-Gly) (interchain with G-Cter in SUMO2)). Lys-394 bears the N6-acetyllysine mark. Residues 406–426 form a disordered region; it reads VQLPREGQEDQGLTKDFSNSP. Ser-425 carries the phosphoserine modification. An RRM 4 domain is found at 446 to 521; that stretch reads ATLHLSNIPP…HHLRVSFSKS (76 aa).

As to quaternary structure, interacts with THBS4 (via the acidic amphipathic C-terminus).

Functionally, RNA-binding protein that mediates pre-mRNA alternative splicing regulation. Plays a role in the regulation of cell proliferation, differentiation and migration. Positive regulator of EPO-dependent erythropoiesis. Participates in cell differentiation regulation by repressing tissue-specific exons. Promotes Fas exon 6 skipping. Binds RNA, preferentially to both poly(G) and poly(U). The sequence is that of Polypyrimidine tract-binding protein 3 (Ptbp3) from Mus musculus (Mouse).